Consider the following 201-residue polypeptide: Cytochrome c oxidase assembly protein CtaG (201 aa).

The Cytoplasmic portion of the chain corresponds to 1–12 (MTDQGENEKKQR). Residues 13–35 (RSNATIAVACLSFFVCMIGAAYA) form a helical; Signal-anchor for type II membrane protein membrane-spanning segment. Topologically, residues 36-201 (SVPLYRIFCQ…KAVGSTRNGG (166 aa)) are periplasmic.

The protein belongs to the COX11/CtaG family.

The protein localises to the cell inner membrane. Its function is as follows. Exerts its effect at some terminal stage of cytochrome c oxidase synthesis, probably by being involved in the insertion of the copper B into subunit I. This chain is Cytochrome c oxidase assembly protein CtaG, found in Brucella suis biovar 1 (strain 1330).